The primary structure comprises 84 residues: UPF0248 protein Pisl_1919 (84 aa).

Belongs to the UPF0248 family.

This is UPF0248 protein Pisl_1919 from Pyrobaculum islandicum (strain DSM 4184 / JCM 9189 / GEO3).